The sequence spans 1106 residues: Probable LRR receptor-like serine/threonine-protein kinase At1g74360 (1106 aa).

Residues 1–34 (MTMVTRVIMTDDDSQSLCFLCFLLFFFITAIAVA) form the signal peptide. Over 35-736 (GDSLDSDREV…PRTLLLIWIS (702 aa)) the chain is Extracellular. LRR repeat units follow at residues 86 to 109 (RSRV…NFSA), 110 to 134 (LTEL…LSRC), 136 to 156 (NLKH…LPGL), 157 to 182 (SNLE…LFCN), 184 to 204 (LVVA…IFNG), 205 to 226 (CRNL…WTGF), and 227 to 250 (GRLV…MFRG). N-linked (GlcNAc...) asparagine glycans are attached at residues asparagine 93 and asparagine 106. A glycan (N-linked (GlcNAc...) asparagine) is linked at asparagine 141. Residues asparagine 188 and asparagine 193 are each glycosylated (N-linked (GlcNAc...) asparagine). Residues asparagine 242 and asparagine 251 are each glycosylated (N-linked (GlcNAc...) asparagine). LRR repeat units follow at residues 252-275 (CTLQ…VSNC), 276-299 (QNLN…IGSI), 300-323 (SSLK…LLNL), 325-346 (NLVF…IFGR), 348-371 (TQVK…NILK), 372-396 (LPNL…ISQI), 398-419 (SLKF…EYGN), 420-443 (MPGL…SFGK), 445-468 (TSLL…IGNC), 470-492 (SLLW…LTRM), 566-593 (VRTL…ISQM), 594-617 (DRLS…IGQL), 619-640 (LAFL…IGNL), 641-664 (KCLQ…LNDL), and 666-690 (ELSK…QVAT). N-linked (GlcNAc...) asparagine glycosylation is found at asparagine 309 and asparagine 322. N-linked (GlcNAc...) asparagine glycosylation is found at asparagine 365, asparagine 374, asparagine 384, and asparagine 408. 2 N-linked (GlcNAc...) asparagine glycosylation sites follow: asparagine 454 and asparagine 467. N-linked (GlcNAc...) asparagine glycosylation is found at asparagine 623, asparagine 628, asparagine 652, asparagine 671, asparagine 709, and asparagine 713. A helical transmembrane segment spans residues 737-757 (LALALAFIACLVVSGIVLMVV). The Cytoplasmic segment spans residues 758 to 1106 (KASREAEIDL…GLSSQGYIEM (349 aa)). Phosphothreonine occurs at positions 803 and 811. A Protein kinase domain is found at 814–1095 (FSEERVVGRG…VKISGKAELF (282 aa)). Residues 820–828 (VGRGGYGTV) and lysine 842 each bind ATP. The active-site Proton acceptor is the aspartate 941. Tyrosine 983 carries the phosphotyrosine modification. Threonine 991 carries the phosphothreonine modification.

Belongs to the protein kinase superfamily. Ser/Thr protein kinase family.

The protein localises to the mitochondrion membrane. It catalyses the reaction L-seryl-[protein] + ATP = O-phospho-L-seryl-[protein] + ADP + H(+). It carries out the reaction L-threonyl-[protein] + ATP = O-phospho-L-threonyl-[protein] + ADP + H(+). The polypeptide is Probable LRR receptor-like serine/threonine-protein kinase At1g74360 (Arabidopsis thaliana (Mouse-ear cress)).